Reading from the N-terminus, the 484-residue chain is Protein DETOXIFICATION 33 (484 aa).

Over residues 1–16 (MGKDKTLPLLDPREPP) the composition is skewed to basic and acidic residues. The interval 1–22 (MGKDKTLPLLDPREPPELTGTK) is disordered. 12 helical membrane-spanning segments follow: residues 39–59 (LWELAGPAIFTAISQYSLGAL), 81–101 (VISGLAFGVMLGMGSALETLC), 122–142 (VILFTTALFLLPVYIWAPPIL), 155–175 (AGKFALWMIPQLFAYAANFPI), 190–210 (WISGVVLVIHAVFSWLFILYF), 218–238 (AITLNTSWWLIVIGQLLYILI), 267–287 (ALMLCLEFWYLMVLVVVTGLL), 294–314 (VDAISICMNIEGWTAMISIGF), 338–358 (VIVVSITSTLIGIVCMIVVLA), 380–400 (IAVLLGFTVLLNSLQPVLSGV), 409–429 (LVAYVNIACYYIIGLPAGLVL), and 439–459 (GIWGGMVAGICLQTLILIGII).

The protein belongs to the multi antimicrobial extrusion (MATE) (TC 2.A.66.1) family.

Its subcellular location is the membrane. The chain is Protein DETOXIFICATION 33 from Arabidopsis thaliana (Mouse-ear cress).